Consider the following 635-residue polypeptide: Phosphatidylserine decarboxylase proenzyme 3 (635 aa).

Residues 1 to 42 are disordered; the sequence is MGNGNSTETKESRRSKMRKKIQNFRSRRRLSRPGSGSVSGLA. Gly2 is lipidated: N-myristoyl glycine. Over residues 15-31 the composition is skewed to basic residues; it reads SKMRKKIQNFRSRRRLS. In terms of domain architecture, C2 spans 22–147; sequence QNFRSRRRLS…VVQEPDSTCK (126 aa). EF-hand domains lie at 180 to 210 and 211 to 246; these read AKRI…FGNV and VAAN…QQEQ. The Ca(2+) site is built by Asp188, Asp190, Asp192, Lys194, Glu199, Asp224, Asn226, Asp228, and Glu235. Catalysis depends on charge relay system; for autoendoproteolytic cleavage activity residues Asp442, His498, and Ser586. Ser586 acts as the Schiff-base intermediate with substrate; via pyruvic acid; for decarboxylase activity in catalysis. Ser586 bears the Pyruvic acid (Ser); by autocatalysis mark.

Belongs to the phosphatidylserine decarboxylase family. PSD-B subfamily. Eukaryotic type II sub-subfamily. As to quaternary structure, heterodimer of a large membrane-associated beta subunit and a small pyruvoyl-containing alpha subunit. Requires pyruvate as cofactor. In terms of processing, is synthesized initially as an inactive proenzyme. Formation of the active enzyme involves a self-maturation process in which the active site pyruvoyl group is generated from an internal serine residue via an autocatalytic post-translational modification. Two non-identical subunits are generated from the proenzyme in this reaction, and the pyruvate is formed at the N-terminus of the alpha chain, which is derived from the carboxyl end of the proenzyme. The autoendoproteolytic cleavage occurs by a canonical serine protease mechanism, in which the side chain hydroxyl group of the serine supplies its oxygen atom to form the C-terminus of the beta chain, while the remainder of the serine residue undergoes an oxidative deamination to produce ammonia and the pyruvoyl prosthetic group on the alpha chain. During this reaction, the Ser that is part of the protease active site of the proenzyme becomes the pyruvoyl prosthetic group, which constitutes an essential element of the active site of the mature decarboxylase. As to expression, expressed in roots, leaves, stems and flowers.

The protein resides in the endoplasmic reticulum membrane. The catalysed reaction is a 1,2-diacyl-sn-glycero-3-phospho-L-serine + H(+) = a 1,2-diacyl-sn-glycero-3-phosphoethanolamine + CO2. Its pathway is phospholipid metabolism; phosphatidylethanolamine biosynthesis; phosphatidylethanolamine from CDP-diacylglycerol: step 2/2. Functionally, catalyzes the formation of phosphatidylethanolamine (PtdEtn) from phosphatidylserine (PtdSer). Plays a central role in phospholipid metabolism and in the interorganelle trafficking of phosphatidylserine. Contributes only to a minor proportion of PtdEtn production. The protein is Phosphatidylserine decarboxylase proenzyme 3 (PSD3) of Arabidopsis thaliana (Mouse-ear cress).